The chain runs to 490 residues: Betaine aldehyde dehydrogenase (490 aa).

I27 and D93 together coordinate K(+). 150–152 (GAW) lines the NAD(+) pocket. The active-site Charge relay system is the K162. 176–179 (KPSE) is a binding site for NAD(+). V180 is a K(+) binding site. 230–233 (GTDT) lines the NAD(+) pocket. L246 contacts K(+). E252 serves as the catalytic Proton acceptor. NAD(+) is bound by residues G254, C286, and E387. C286 (nucleophile) is an active-site residue. The residue at position 286 (C286) is a Cysteine sulfenic acid (-SOH). Positions 457 and 460 each coordinate K(+). Residue E464 is the Charge relay system of the active site.

It belongs to the aldehyde dehydrogenase family. As to quaternary structure, dimer of dimers. Requires K(+) as cofactor.

It catalyses the reaction betaine aldehyde + NAD(+) + H2O = glycine betaine + NADH + 2 H(+). Its pathway is amine and polyamine biosynthesis; betaine biosynthesis via choline pathway; betaine from betaine aldehyde: step 1/1. In terms of biological role, involved in the biosynthesis of the osmoprotectant glycine betaine. Catalyzes the irreversible oxidation of betaine aldehyde to the corresponding acid. This is Betaine aldehyde dehydrogenase from Pseudomonas fluorescens (strain ATCC BAA-477 / NRRL B-23932 / Pf-5).